The sequence spans 490 residues: Katanin p60 ATPase-containing subunit A-like 1 (490 aa).

Residue M1 is modified to N-acetylmethionine. The tract at residues 96–182 (PAVWPPPVPA…ASDGEIPKFD (87 aa)) is disordered. Over residues 116–127 (PNREVRPLRKEM) the composition is skewed to basic and acidic residues. Positions 128–139 (AGVGARGPVGRA) are enriched in low complexity. Basic and acidic residues predominate over residues 143-169 (SKSEKPSASRDKDCRARGRDDKGRKNM). S174 bears the Phosphoserine mark. ATP is bound at residue 248–255 (GPPGTGKT).

The protein belongs to the AAA ATPase family. Katanin p60 subunit A1 subfamily. A-like 1 sub-subfamily. In terms of assembly, interacts with KATNB1 and KATNBL1.

It is found in the cytoplasm. It localises to the cytoskeleton. The protein localises to the spindle pole. Its subcellular location is the spindle. The catalysed reaction is n ATP + n H2O + a microtubule = n ADP + n phosphate + (n+1) alpha/beta tubulin heterodimers.. Its function is as follows. Regulates microtubule dynamics in Sertoli cells, a process that is essential for spermiogenesis and male fertility. Severs microtubules in an ATP-dependent manner, promoting rapid reorganization of cellular microtubule arrays. Has microtubule-severing activity in vitro. This chain is Katanin p60 ATPase-containing subunit A-like 1, found in Oryctolagus cuniculus (Rabbit).